Reading from the N-terminus, the 140-residue chain is Oleosin Cor a 13 (140 aa).

The next 2 helical transmembrane spans lie at 31–51 (GSLL…LTLA) and 75–95 (GFLA…WIYR).

This sequence belongs to the oleosin family. In terms of tissue distribution, expressed in seeds.

The protein localises to the lipid droplet. It localises to the membrane. In terms of biological role, may have a structural role to stabilize the lipid body during desiccation of the seed by preventing coalescence of the oil. Probably interacts with both lipid and phospholipid moieties of lipid bodies. May also provide recognition signals for specific lipase anchorage in lipolysis during seedling growth. The protein is Oleosin Cor a 13 of Corylus avellana (European hazel).